The following is a 179-amino-acid chain: Adenine phosphoribosyltransferase (179 aa).

It belongs to the purine/pyrimidine phosphoribosyltransferase family. In terms of assembly, homodimer.

The protein resides in the cytoplasm. The catalysed reaction is AMP + diphosphate = 5-phospho-alpha-D-ribose 1-diphosphate + adenine. It functions in the pathway purine metabolism; AMP biosynthesis via salvage pathway; AMP from adenine: step 1/1. Its function is as follows. Catalyzes a salvage reaction resulting in the formation of AMP, that is energically less costly than de novo synthesis. This Helicobacter pylori (strain HPAG1) protein is Adenine phosphoribosyltransferase.